We begin with the raw amino-acid sequence, 678 residues long: GAS2-like protein 1 (678 aa).

Ala-2 carries the N-acetylalanine modification. Residues 27-148 form the Calponin-homology (CH) domain; sequence EAMKEDLADW…CLLEVARRGA (122 aa). A GAR domain is found at 203-275; sequence NDLRNLDELV…HYLDKHDPCR (73 aa). Positions 276–291 are enriched in polar residues; the sequence is CSSSTHRLPQQRTGTF. Disordered stretches follow at residues 276–524 and 538–678; these read CSSS…FRRL and AASH…DSSM. 2 positions are modified to phosphoserine: Ser-306 and Ser-316. Basic and acidic residues predominate over residues 327–340; sequence GTKEGPETPLRPRD. The residue at position 334 (Thr-334) is a Phosphothreonine. 2 positions are modified to phosphoserine: Ser-352 and Ser-355. A compositionally biased stretch (low complexity) spans 354-365; that stretch reads DSDSSASSAQSG. The span at 370–381 shows a compositional bias: basic and acidic residues; the sequence is RSDDSATGSRRE. The span at 392-403 shows a compositional bias: low complexity; it reads PASPRRPTAPRS. The residue at position 394 (Ser-394) is a Phosphoserine. Basic and acidic residues predominate over residues 404–413; sequence QSRDRLDRGR. Ser-436 and Ser-438 each carry phosphoserine. Residues 437-454 show a composition bias toward basic and acidic residues; the sequence is QSREEQAVLMVRRDRDGQ. Over residues 461–471 the composition is skewed to gly residues; that stretch reads GRGGGGSGGSG. 2 positions are modified to phosphoserine: Ser-482 and Ser-489. Over residues 485–495 the composition is skewed to pro residues; that stretch reads APRPSRGPSPG. An Omega-N-methylarginine modification is found at Arg-490. Ser-493 carries the post-translational modification Phosphoserine. Thr-501 is subject to Phosphothreonine. Residue Arg-507 is modified to Omega-N-methylarginine. Composition is skewed to low complexity over residues 509–519 and 554–568; these read PLQLDPQQEQQ and DSAY…SSLS. An Omega-N-methylarginine modification is found at Arg-630. Basic and acidic residues predominate over residues 631-641; sequence GRMDTQPDRKP. A Phosphoserine modification is found at Ser-654. Polar residues predominate over residues 666–678; that stretch reads HSVTPRTEPDSSM.

This sequence belongs to the GAS2 family. In terms of assembly, interacts with MAPRE1.

The protein localises to the cytoplasm. The protein resides in the cytoskeleton. It localises to the stress fiber. Its function is as follows. Seems to be involved in the cross-linking of microtubules and microfilaments. Regulates microtubule dynamics and stability by interacting with microtubule plus-end tracking proteins, such as MAPRE1, to regulate microtubule growth along actin stress fibers. The protein is GAS2-like protein 1 (Gas2l1) of Mus musculus (Mouse).